The chain runs to 488 residues: Type II restriction enzyme HgaI (488 aa).

It catalyses the reaction Endonucleolytic cleavage of DNA to give specific double-stranded fragments with terminal 5'-phosphates.. Its function is as follows. An S subtype restriction enzyme that recognizes the double-stranded sequences 5'-GACGC-3' and 5'-GCGTC-3' and cleaves respectively 10 bases after G-1 and 10 bases before G'-1. The chain is Type II restriction enzyme HgaI (hgaIR) from Avibacterium volantium (Pasteurella volantium).